The chain runs to 117 residues: Large ribosomal subunit protein uL18 (117 aa).

Belongs to the universal ribosomal protein uL18 family. As to quaternary structure, part of the 50S ribosomal subunit; part of the 5S rRNA/L5/L18/L25 subcomplex. Contacts the 5S and 23S rRNAs.

Its function is as follows. This is one of the proteins that bind and probably mediate the attachment of the 5S RNA into the large ribosomal subunit, where it forms part of the central protuberance. This chain is Large ribosomal subunit protein uL18, found in Pasteurella multocida (strain Pm70).